Reading from the N-terminus, the 557-residue chain is Dihydroxy-acid dehydratase (557 aa).

Cys50 contributes to the [2Fe-2S] cluster binding site. Asp82 contributes to the Mg(2+) binding site. Residue Cys123 participates in [2Fe-2S] cluster binding. 2 residues coordinate Mg(2+): Asp124 and Lys125. Lys125 bears the N6-carboxylysine mark. A [2Fe-2S] cluster-binding site is contributed by Cys195. A Mg(2+)-binding site is contributed by Glu447. The Proton acceptor role is filled by Ser473.

It belongs to the IlvD/Edd family. In terms of assembly, homodimer. It depends on [2Fe-2S] cluster as a cofactor. The cofactor is Mg(2+).

The catalysed reaction is (2R)-2,3-dihydroxy-3-methylbutanoate = 3-methyl-2-oxobutanoate + H2O. The enzyme catalyses (2R,3R)-2,3-dihydroxy-3-methylpentanoate = (S)-3-methyl-2-oxopentanoate + H2O. It participates in amino-acid biosynthesis; L-isoleucine biosynthesis; L-isoleucine from 2-oxobutanoate: step 3/4. Its pathway is amino-acid biosynthesis; L-valine biosynthesis; L-valine from pyruvate: step 3/4. Functions in the biosynthesis of branched-chain amino acids. Catalyzes the dehydration of (2R,3R)-2,3-dihydroxy-3-methylpentanoate (2,3-dihydroxy-3-methylvalerate) into 2-oxo-3-methylpentanoate (2-oxo-3-methylvalerate) and of (2R)-2,3-dihydroxy-3-methylbutanoate (2,3-dihydroxyisovalerate) into 2-oxo-3-methylbutanoate (2-oxoisovalerate), the penultimate precursor to L-isoleucine and L-valine, respectively. The protein is Dihydroxy-acid dehydratase of Janthinobacterium sp. (strain Marseille) (Minibacterium massiliensis).